Here is a 145-residue protein sequence, read N- to C-terminus: 3-dehydroquinate dehydratase (145 aa).

The Proton acceptor role is filled by tyrosine 24. Residues asparagine 75, histidine 81, and aspartate 88 each contribute to the substrate site. The active-site Proton donor is the histidine 101. Substrate-binding positions include 102–103 (IS) and arginine 112.

This sequence belongs to the type-II 3-dehydroquinase family. As to quaternary structure, homododecamer.

It catalyses the reaction 3-dehydroquinate = 3-dehydroshikimate + H2O. Its pathway is metabolic intermediate biosynthesis; chorismate biosynthesis; chorismate from D-erythrose 4-phosphate and phosphoenolpyruvate: step 3/7. Its function is as follows. Catalyzes a trans-dehydration via an enolate intermediate. This is 3-dehydroquinate dehydratase from Rhizobium etli (strain CIAT 652).